The following is a 444-amino-acid chain: Phosphoglucosamine mutase (444 aa).

Serine 99 (phosphoserine intermediate) is an active-site residue. Residues serine 99, aspartate 242, aspartate 244, and aspartate 246 each contribute to the Mg(2+) site. Residue serine 99 is modified to Phosphoserine.

It belongs to the phosphohexose mutase family. Mg(2+) serves as cofactor. Post-translationally, activated by phosphorylation.

It carries out the reaction alpha-D-glucosamine 1-phosphate = D-glucosamine 6-phosphate. Functionally, catalyzes the conversion of glucosamine-6-phosphate to glucosamine-1-phosphate. The protein is Phosphoglucosamine mutase of Aliarcobacter butzleri (strain RM4018) (Arcobacter butzleri).